Here is an 893-residue protein sequence, read N- to C-terminus: UPF0182 protein CLD_0809 (893 aa).

7 helical membrane passes run 9–29 (IPLFIIILFIAFFNKIINFII), 49–69 (AIIILMIPIFIIFFISIWMYY), 94–114 (LFFIFNFIVSIFLAYIFSSSY), 154–174 (VIISLLLFLVITTFIAYFILE), 202–222 (LAIVSGLIILFISFGHLIKIW), 246–266 (FYKIIVVITLISSIVTLLSIV), and 273–293 (VSICIGITIFLIVSQNIASFL).

Belongs to the UPF0182 family.

Its subcellular location is the cell membrane. The polypeptide is UPF0182 protein CLD_0809 (Clostridium botulinum (strain Okra / Type B1)).